The sequence spans 209 residues: Uracil phosphoribosyltransferase (209 aa).

5-phospho-alpha-D-ribose 1-diphosphate contacts are provided by residues Arg79, Arg104, and 131 to 139 (DPMLATGGS). Residues Ile194 and 199-201 (GDA) each bind uracil. Residue Asp200 coordinates 5-phospho-alpha-D-ribose 1-diphosphate.

It belongs to the UPRTase family. Mg(2+) is required as a cofactor.

It catalyses the reaction UMP + diphosphate = 5-phospho-alpha-D-ribose 1-diphosphate + uracil. It functions in the pathway pyrimidine metabolism; UMP biosynthesis via salvage pathway; UMP from uracil: step 1/1. Its activity is regulated as follows. Allosterically activated by GTP. Catalyzes the conversion of uracil and 5-phospho-alpha-D-ribose 1-diphosphate (PRPP) to UMP and diphosphate. The sequence is that of Uracil phosphoribosyltransferase from Lachnoclostridium phytofermentans (strain ATCC 700394 / DSM 18823 / ISDg) (Clostridium phytofermentans).